Consider the following 256-residue polypeptide: MVSPDLIRNVVGIVGNAISFGLFLSPVLTFWRIIKEKDMKYFKADPYLATLLNCMLWVFYGLPIVHPNSILVVTINGIGLVIEAVYLTIFFLFSNKKNKKMGVVLATEALFMAAVALGVLLGAHTHQRRSLIVGILCVIFGTIMYSSPLTIMSQVVKTKSVEYMPLLLSVVSFLNGLCWTSYALIRFDIFITIPNGLGVLFTLMQLILDKNQDKNLELPTVAPVAKETSIVTPVSKDDDINGSTASHVIINITKEP.

Topologically, residues Met1 to Asn9 are extracellular. The helical transmembrane segment at Val10 to Phe30 threads the bilayer. A MtN3/slv 1 domain is found at Val10–Lys97. Residues Trp31 to Asp45 lie on the Cytoplasmic side of the membrane. Residues Pro46 to His66 traverse the membrane as a helical segment. Residues Pro67 to Ser69 lie on the Extracellular side of the membrane. The chain crosses the membrane as a helical span at residues Ile70–Phe90. Over Phe91–Lys100 the chain is Cytoplasmic. A helical membrane pass occupies residues Met101 to Leu121. Over Gly122–Ser130 the chain is Extracellular. Residues Leu131–Ile151 traverse the membrane as a helical segment. The MtN3/slv 2 domain maps to Val133–Gln212. Residues Met152–Met164 are Cytoplasmic-facing. The chain crosses the membrane as a helical span at residues Pro165 to Ile185. Position 186 (Arg186) is a topological domain, extracellular. Residues Phe187–Ile207 traverse the membrane as a helical segment. Residues Leu208–Pro256 are Cytoplasmic-facing.

It belongs to the SWEET sugar transporter family. As to quaternary structure, forms homooligomers and/or heterooligomers.

The protein resides in the cell membrane. Functionally, mediates both low-affinity uptake and efflux of sugar across the plasma membrane. The chain is Putative bidirectional sugar transporter SWEET7e (SWEET7E) from Oryza sativa subsp. japonica (Rice).